The sequence spans 348 residues: Sulfate/thiosulfate import ATP-binding protein CysA (348 aa).

The region spanning 3–237 (IEIRNITKSF…PATPFVCQFI (235 aa)) is the ABC transporter domain. 35 to 42 (GPSGCGKT) lines the ATP pocket.

It belongs to the ABC transporter superfamily. Sulfate/tungstate importer (TC 3.A.1.6) family. As to quaternary structure, the complex is composed of two ATP-binding proteins (CysA), two transmembrane proteins (CysT and CysW) and a solute-binding protein (CysP).

It is found in the cell inner membrane. The enzyme catalyses sulfate(out) + ATP + H2O = sulfate(in) + ADP + phosphate + H(+). It carries out the reaction thiosulfate(out) + ATP + H2O = thiosulfate(in) + ADP + phosphate + H(+). Its function is as follows. Part of the ABC transporter complex CysAWTP involved in sulfate/thiosulfate import. Responsible for energy coupling to the transport system. In Methylococcus capsulatus (strain ATCC 33009 / NCIMB 11132 / Bath), this protein is Sulfate/thiosulfate import ATP-binding protein CysA.